The primary structure comprises 329 residues: Ubiquinol oxidase 1c, mitochondrial (329 aa).

A mitochondrion-targeting transit peptide spans 1 to 45; sequence MITTLLRRSLLDASKQATSINGILFHQLAPAKYFRVPAVGGLRDF. Residues 154 to 174 form a helical membrane-spanning segment; that stretch reads AIMLETVAAVPGMVGGMLMHF. Fe cation is bound by residues glutamate 158, glutamate 197, and histidine 200. A helical membrane pass occupies residues 216 to 236; it reads ALVISVQGVFFNAYLIGYIIS. The Fe cation site is built by glutamate 248, glutamate 299, and histidine 302.

Belongs to the alternative oxidase family. As to quaternary structure, homodimer; disulfide-linked. Fe cation is required as a cofactor. Expressed in roots, stems, leaves, cotyledons and flowers. High expression in stamens.

The protein localises to the mitochondrion inner membrane. It catalyses the reaction 2 a ubiquinol + O2 = 2 a ubiquinone + 2 H2O. In terms of biological role, catalyzes the cyanide-resistant oxidation of ubiquinol and the reduction of molecular oxygen to water, but does not translocate protons and consequently is not linked to oxidative phosphorylation. May increase respiration when the cytochrome respiratory pathway is restricted, or in response to low temperatures. The sequence is that of Ubiquinol oxidase 1c, mitochondrial (AOX1C) from Arabidopsis thaliana (Mouse-ear cress).